The sequence spans 253 residues: Chromosome-partitioning ATPase Soj (253 aa).

Positions 11, 12, 13, 14, 15, 16, 17, 18, 211, and 213 each coordinate ATP. Thr-17 lines the Mg(2+) pocket.

This sequence belongs to the ParA family.

The enzyme catalyses ATP + H2O = ADP + phosphate + H(+). ATPase probably involved in chromosome partitioning. Cooperatively binds dsDNA, forming nucleoprotein filaments in a strictly ATP-dependent fashion. This is Chromosome-partitioning ATPase Soj from Treponema pallidum (strain Nichols).